Here is a 265-residue protein sequence, read N- to C-terminus: UPF0354 protein GWCH70_2742 (265 aa).

The protein belongs to the UPF0354 family.

This Geobacillus sp. (strain WCH70) protein is UPF0354 protein GWCH70_2742.